The following is a 101-amino-acid chain: DNA-directed RNA polymerase subunit omega (101 aa).

Low complexity predominate over residues 1–13 (MSSTPAAASATPS). A disordered region spans residues 1–22 (MSSTPAAASATPSHGALPAYDT).

It belongs to the RNA polymerase subunit omega family. In terms of assembly, the RNAP catalytic core consists of 2 alpha, 1 beta, 1 beta' and 1 omega subunit. When a sigma factor is associated with the core the holoenzyme is formed, which can initiate transcription.

The enzyme catalyses RNA(n) + a ribonucleoside 5'-triphosphate = RNA(n+1) + diphosphate. Functionally, promotes RNA polymerase assembly. Latches the N- and C-terminal regions of the beta' subunit thereby facilitating its interaction with the beta and alpha subunits. This chain is DNA-directed RNA polymerase subunit omega, found in Rhodococcus jostii (strain RHA1).